Here is a 340-residue protein sequence, read N- to C-terminus: Glycerol-3-phosphate dehydrogenase [NAD(P)+] (340 aa).

Serine 13, tyrosine 14, and lysine 108 together coordinate NADPH. Residues lysine 108, glycine 137, and threonine 139 each coordinate sn-glycerol 3-phosphate. Alanine 141 provides a ligand contact to NADPH. Positions 193, 246, 256, 257, and 258 each coordinate sn-glycerol 3-phosphate. Lysine 193 functions as the Proton acceptor in the catalytic mechanism. Arginine 257 is a binding site for NADPH. NADPH-binding residues include isoleucine 281 and glutamate 283.

This sequence belongs to the NAD-dependent glycerol-3-phosphate dehydrogenase family.

Its subcellular location is the cytoplasm. It catalyses the reaction sn-glycerol 3-phosphate + NAD(+) = dihydroxyacetone phosphate + NADH + H(+). It carries out the reaction sn-glycerol 3-phosphate + NADP(+) = dihydroxyacetone phosphate + NADPH + H(+). It functions in the pathway membrane lipid metabolism; glycerophospholipid metabolism. Catalyzes the reduction of the glycolytic intermediate dihydroxyacetone phosphate (DHAP) to sn-glycerol 3-phosphate (G3P), the key precursor for phospholipid synthesis. This is Glycerol-3-phosphate dehydrogenase [NAD(P)+] from Bartonella henselae (strain ATCC 49882 / DSM 28221 / CCUG 30454 / Houston 1) (Rochalimaea henselae).